The following is a 90-amino-acid chain: Auxin-responsive protein SAUR22 (90 aa).

It belongs to the ARG7 family.

It localises to the cell membrane. Its function is as follows. Functions as a positive effector of cell expansion through modulation of auxin transport. The protein is Auxin-responsive protein SAUR22 of Arabidopsis thaliana (Mouse-ear cress).